The following is a 377-amino-acid chain: Spermidine/putrescine import ATP-binding protein PotA (377 aa).

Residues 18–248 (IRLSGISKSF…PKNLFVARFI (231 aa)) form the ABC transporter domain. 50 to 57 (GPSGCGKT) provides a ligand contact to ATP.

Belongs to the ABC transporter superfamily. Spermidine/putrescine importer (TC 3.A.1.11.1) family. As to quaternary structure, the complex is composed of two ATP-binding proteins (PotA), two transmembrane proteins (PotB and PotC) and a solute-binding protein (PotD).

Its subcellular location is the cell inner membrane. The enzyme catalyses ATP + H2O + polyamine-[polyamine-binding protein]Side 1 = ADP + phosphate + polyamineSide 2 + [polyamine-binding protein]Side 1.. Part of the ABC transporter complex PotABCD involved in spermidine/putrescine import. Responsible for energy coupling to the transport system. The chain is Spermidine/putrescine import ATP-binding protein PotA from Vibrio vulnificus (strain CMCP6).